The chain runs to 193 residues: MPVAVMAQNPVSFQRLQEQCEEQELEAPGGIANPQVYSQLLALYLLHNDMNNARYLWKRIPPAIKSAHSELGGIWEVGQKIWQRDFPGIYTSISACQWSEAIQPVMEAVRDATRRRAFGLVSQAYTSISADDFAAFVGLSVEEAVKGVIEQGWQADLATRMVMPKKPDSAPLSLIPNEQQLARLTDYVAFLEN.

Positions Gln-8–Leu-181 constitute a PCI domain.

The protein belongs to the CSN8 family. Component of the CSN complex, probably composed of cops1, cops2, cops3, cops4, cops5, cops6, cops7, cops8 and cops9.

The protein localises to the cytoplasm. Its subcellular location is the nucleus. Functionally, component of the COP9 signalosome complex (CSN), a complex involved in various cellular and developmental processes. The CSN complex is an essential regulator of the ubiquitin (Ubl) conjugation pathway by mediating the deneddylation of the cullin subunits of E3 ligase complexes, leading to modify the Ubl ligase activity. In Xenopus tropicalis (Western clawed frog), this protein is COP9 signalosome complex subunit 8 (csn8).